A 139-amino-acid chain; its full sequence is GATA transcription factor 16 (139 aa).

Residues 32 to 86 (NDKKKTCADCGTSKTPLWRGGPVGPKSLCNACGIRNRKKRRGGTEDNKKLKKSSS) form a GATA-type zinc finger. A disordered region spans residues 67–98 (NRKKRRGGTEDNKKLKKSSSGGGNRKFGESLK).

It belongs to the type IV zinc-finger family. Class B subfamily.

The protein resides in the nucleus. Functionally, transcriptional regulator that specifically binds 5'-GATA-3' or 5'-GAT-3' motifs within gene promoters. This Arabidopsis thaliana (Mouse-ear cress) protein is GATA transcription factor 16 (GATA16).